The sequence spans 420 residues: C-methyltransferase NovU (420 aa).

This sequence belongs to the methyltransferase superfamily.

The protein operates within antibiotic biosynthesis; novobiocin biosynthesis. C-methyltransferase that acts together with NovW to catalyze the formation of dTDP-4-keto-6-deoxy-5-C-methyl-L-lyxo-hexose from dTDP-4-keto-6-deoxy-D-glucose in the novobiocin biosynthesis pathway, an aminocoumarin family antibiotic that targets bacterial DNA gyrases. The polypeptide is C-methyltransferase NovU (novU) (Streptomyces niveus (Streptomyces spheroides)).